The primary structure comprises 155 residues: Small ribosomal subunit protein uS7cz/uS7cy (155 aa).

This sequence belongs to the universal ribosomal protein uS7 family. As to quaternary structure, part of the 30S ribosomal subunit.

The protein localises to the plastid. The protein resides in the chloroplast. Its function is as follows. One of the primary rRNA binding proteins, it binds directly to 16S rRNA where it nucleates assembly of the head domain of the 30S subunit. In Eucalyptus globulus subsp. globulus (Tasmanian blue gum), this protein is Small ribosomal subunit protein uS7cz/uS7cy (rps7-A).